Reading from the N-terminus, the 223-residue chain is Deoxyribose-phosphate aldolase (223 aa).

D89 serves as the catalytic Proton donor/acceptor. The Schiff-base intermediate with acetaldehyde role is filled by K154. K183 (proton donor/acceptor) is an active-site residue.

This sequence belongs to the DeoC/FbaB aldolase family. DeoC type 1 subfamily.

It is found in the cytoplasm. It catalyses the reaction 2-deoxy-D-ribose 5-phosphate = D-glyceraldehyde 3-phosphate + acetaldehyde. It functions in the pathway carbohydrate degradation; 2-deoxy-D-ribose 1-phosphate degradation; D-glyceraldehyde 3-phosphate and acetaldehyde from 2-deoxy-alpha-D-ribose 1-phosphate: step 2/2. In terms of biological role, catalyzes a reversible aldol reaction between acetaldehyde and D-glyceraldehyde 3-phosphate to generate 2-deoxy-D-ribose 5-phosphate. This Thermoanaerobacter sp. (strain X514) protein is Deoxyribose-phosphate aldolase.